A 248-amino-acid chain; its full sequence is Ferric nitrobindin-like protein (248 aa).

2 stretches are compositionally biased toward polar residues: residues 1 to 25 and 32 to 43; these read MSSD…TNSG and QAVNLAAEQSKS. Residues 1–49 form a disordered region; that stretch reads MSSDKANNQSPDQGANTPAESTNSGPKLDGNQAVNLAAEQSKSTADKNL. The GXWXGXG motif lies at 82 to 88; the sequence is GVWRGQG. The disordered stretch occupies residues 118–147; that stretch reads SRTWKINPPAEEGAEADGDEASAESAGEPE. The segment covering 129 to 139 has biased composition (acidic residues); sequence EGAEADGDEAS.

It belongs to the nitrobindin family.

The polypeptide is Ferric nitrobindin-like protein (Corynebacterium urealyticum (strain ATCC 43042 / DSM 7109)).